We begin with the raw amino-acid sequence, 556 residues long: Optineurin (556 aa).

Residues 1-33 (MSSKPQIRPAENGEHCRSKMENGMDSMAPPTLS) are disordered. The segment covering 11–22 (ENGEHCRSKMEN) has biased composition (basic and acidic residues). Positions 38 to 164 (EEMVQQMKEL…SELQVKLNIA (127 aa)) form a coiled coil. The short motif at 168-173 (DSFVEI) is the LIR element. A coiled-coil region spans residues 219–487 (VSQLLCCLRN…LLKEQQNLED (269 aa)). Residues 245–274 (ERLSKMENETSNCLESGTQTNQEEESSEAI) are disordered. Residues 253-265 (ETSNCLESGTQTN) show a composition bias toward polar residues. The short motif at 453-458 (DFHAER) is the UBAN element. The tract at residues 496-524 (MQNRHGARAPDREHSPRLVQRGTGSQEWP) is disordered. The CCHC NOA-type zinc-finger motif lies at 526–556 (QRNISIYSCPKCEEILPDLDTLQIHVMDCIN). Positions 534, 537, 550, and 554 each coordinate Zn(2+).

As to quaternary structure, binds to linear ubiquitin chains. Interacts with LC3 family members. In terms of tissue distribution, expressed in erythrocytes, skeletal muscle, heart, spleen and brain. Weakly expressed in lung and liver (at protein level).

The protein localises to the cytoplasm. Its subcellular location is the perinuclear region. The protein resides in the golgi apparatus. It localises to the trans-Golgi network. It is found in the cytoplasmic vesicle. The protein localises to the recycling endosome. Its subcellular location is the autophagosome. Its function is as follows. Probably part of the TNF-alpha signaling pathway that can shift the equilibrium toward induction of cell death. May act by regulating membrane trafficking and cellular morphogenesis. May act as autophagy receptor that interacts directly with both the cargo to become degraded and an autophagy modifier of the MAP1 LC3 family. This chain is Optineurin (OPTN), found in Gallus gallus (Chicken).